The sequence spans 348 residues: GMP reductase (348 aa).

108–131 is a binding site for NADP(+); it reads ADFIKLRQILALSPSLKFICIDVA. Positions 181 and 183 each coordinate K(+). The active-site Thioimidate intermediate is the cysteine 186. 216–239 provides a ligand contact to NADP(+); that stretch reads IVSDGGCTMPGDVAKAFGGGADFV.

It belongs to the IMPDH/GMPR family. GuaC type 1 subfamily. As to quaternary structure, homotetramer.

It catalyses the reaction IMP + NH4(+) + NADP(+) = GMP + NADPH + 2 H(+). Catalyzes the irreversible NADPH-dependent deamination of GMP to IMP. It functions in the conversion of nucleobase, nucleoside and nucleotide derivatives of G to A nucleotides, and in maintaining the intracellular balance of A and G nucleotides. This Edwardsiella ictaluri (strain 93-146) protein is GMP reductase.